A 121-amino-acid polypeptide reads, in one-letter code: UPF0102 protein Mvan_2202 (121 aa).

Belongs to the UPF0102 family.

The protein is UPF0102 protein Mvan_2202 of Mycolicibacterium vanbaalenii (strain DSM 7251 / JCM 13017 / BCRC 16820 / KCTC 9966 / NRRL B-24157 / PYR-1) (Mycobacterium vanbaalenii).